Reading from the N-terminus, the 301-residue chain is Methionyl-tRNA formyltransferase (301 aa).

109 to 112 contributes to the (6S)-5,6,7,8-tetrahydrofolate binding site; the sequence is SILP.

This sequence belongs to the Fmt family.

The catalysed reaction is L-methionyl-tRNA(fMet) + (6R)-10-formyltetrahydrofolate = N-formyl-L-methionyl-tRNA(fMet) + (6S)-5,6,7,8-tetrahydrofolate + H(+). Attaches a formyl group to the free amino group of methionyl-tRNA(fMet). The formyl group appears to play a dual role in the initiator identity of N-formylmethionyl-tRNA by promoting its recognition by IF2 and preventing the misappropriation of this tRNA by the elongation apparatus. This is Methionyl-tRNA formyltransferase from Campylobacter curvus (strain 525.92).